Reading from the N-terminus, the 259-residue chain is 1,2-dihydroxy-1,2-dihydronaphthalene dehydrogenase (259 aa).

8–32 contacts NAD(+); that stretch reads SITGAGSGIGLELVRSFKSAGYYVS. Serine 140 contributes to the substrate binding site. Catalysis depends on tyrosine 153, which acts as the Proton acceptor.

It belongs to the short-chain dehydrogenases/reductases (SDR) family.

It catalyses the reaction (1R,2S)-1,2-dihydronaphthalene-1,2-diol + NAD(+) = naphthalene-1,2-diol + NADH + H(+). The enzyme catalyses cis-1,2-dihydroxy-1,2-dihydrodibenzothiophene + NAD(+) = 1,2-dihydroxydibenzothiophene + NADH + H(+). It participates in aromatic compound metabolism; naphthalene degradation. Catalyzes the oxidation of naphthalene dihydrodiol into 1,2-dihydroxynaphthalene. This Pseudomonas putida (Arthrobacter siderocapsulatus) protein is 1,2-dihydroxy-1,2-dihydronaphthalene dehydrogenase (nahB).